The following is a 705-amino-acid chain: 1,4-alpha-glucan branching enzyme GlgB (705 aa).

D393 serves as the catalytic Nucleophile. E446 serves as the catalytic Proton donor.

Belongs to the glycosyl hydrolase 13 family. GlgB subfamily. Monomer.

The enzyme catalyses Transfers a segment of a (1-&gt;4)-alpha-D-glucan chain to a primary hydroxy group in a similar glucan chain.. It participates in glycan biosynthesis; glycogen biosynthesis. Catalyzes the formation of the alpha-1,6-glucosidic linkages in glycogen by scission of a 1,4-alpha-linked oligosaccharide from growing alpha-1,4-glucan chains and the subsequent attachment of the oligosaccharide to the alpha-1,6 position. This chain is 1,4-alpha-glucan branching enzyme GlgB, found in Picrophilus torridus (strain ATCC 700027 / DSM 9790 / JCM 10055 / NBRC 100828 / KAW 2/3).